The sequence spans 208 residues: Small ribosomal subunit protein eS1 (208 aa).

It belongs to the eukaryotic ribosomal protein eS1 family.

This is Small ribosomal subunit protein eS1 from Saccharolobus islandicus (strain Y.N.15.51 / Yellowstone #2) (Sulfolobus islandicus).